Here is a 460-residue protein sequence, read N- to C-terminus: Anthocyanidin 3-O-glucoside 5-O-glucosyltransferase 1 (460 aa).

Positions 1–22 (MVRRRVLLATFPAQGHINPALQ) are cleaved as a signal peptide. The active-site Proton acceptor is His-16. His-16 provides a ligand contact to an anthocyanidin. UDP-alpha-D-glucose-binding residues include Gln-338, His-353, Trp-356, Asn-357, Ser-358, Glu-361, Asp-377, and Gln-378.

This sequence belongs to the UDP-glycosyltransferase family.

It catalyses the reaction an anthocyanidin 3-O-beta-D-glucoside + UDP-alpha-D-glucose = an anthocyanidin 3,5-di-O-beta-D-glucoside + UDP + 2 H(+). It participates in pigment biosynthesis; anthocyanin biosynthesis. In terms of biological role, catalyzes the glucosylation at the O-5 position of anthocyanidin 3-glucosides to form anthocyanidin 3,5-di-O-glucosides using UDP-glucose as sugar donor. Anthocyanidin 3,5-di-O-glucosides are molecules that are responsible for pigmentation. Also acts on anthocyanidin 3-O-(6-O-malonylglucoside). Much less active with hydroxycinnamoylglucose derivatives. No activity in the absence of the 3-O-glucoside group. The sequence is that of Anthocyanidin 3-O-glucoside 5-O-glucosyltransferase 1 (PF3R4) from Perilla frutescens (Beefsteak mint).